The primary structure comprises 244 residues: MLPSLIQPCSSGTLLMLLMSNLFLWEKVSSAPINASEAVLSDLKDLFDNATVLSGEMSKLGVIMRKEFFMNSFSSETFNKIILDLHKSTENITKAFNSCHTVPINVPETVEDVRKTSFEEFLKMVLHMLLAWKEPLKHLVTELSALPECPYRILSKAEAIEAKNKDLLEYIIRIISKVNPAIKENEDYPTWSDLDSLKSADKETQFFALYMFSFCLRIDLETVDFLVNFLKCLLLYDDVCYSEF.

Residues 1-30 form the signal peptide; sequence MLPSLIQPCSSGTLLMLLMSNLFLWEKVSS. 2 cysteine pairs are disulfide-bonded: C99–C215 and C232–C240.

The protein belongs to the somatotropin/prolactin family.

Its subcellular location is the secreted. In Mus musculus (Mouse), this protein is Prolactin-7D1 (Prl7d1).